A 651-amino-acid chain; its full sequence is Acetyl-coenzyme A synthetase (651 aa).

CoA is bound by residues 193–196 and Thr312; that span reads RRGK. Residues 388–390, 412–417, Asp501, and Arg516 each bind ATP; these read GEP and DTWWQT. Ser524 contacts CoA. Residues Val538, His540, and Val543 each coordinate Mg(2+). Lys610 is modified (N6-acetyllysine).

The protein belongs to the ATP-dependent AMP-binding enzyme family. Mg(2+) serves as cofactor. In terms of processing, acetylated. Deacetylation by the SIR2-homolog deacetylase activates the enzyme.

The enzyme catalyses acetate + ATP + CoA = acetyl-CoA + AMP + diphosphate. Its function is as follows. Catalyzes the conversion of acetate into acetyl-CoA (AcCoA), an essential intermediate at the junction of anabolic and catabolic pathways. AcsA undergoes a two-step reaction. In the first half reaction, AcsA combines acetate with ATP to form acetyl-adenylate (AcAMP) intermediate. In the second half reaction, it can then transfer the acetyl group from AcAMP to the sulfhydryl group of CoA, forming the product AcCoA. The sequence is that of Acetyl-coenzyme A synthetase from Streptomyces coelicolor (strain ATCC BAA-471 / A3(2) / M145).